A 233-amino-acid polypeptide reads, in one-letter code: Leucyl/phenylalanyl-tRNA--protein transferase (233 aa).

It belongs to the L/F-transferase family.

The protein resides in the cytoplasm. It catalyses the reaction N-terminal L-lysyl-[protein] + L-leucyl-tRNA(Leu) = N-terminal L-leucyl-L-lysyl-[protein] + tRNA(Leu) + H(+). It carries out the reaction N-terminal L-arginyl-[protein] + L-leucyl-tRNA(Leu) = N-terminal L-leucyl-L-arginyl-[protein] + tRNA(Leu) + H(+). The enzyme catalyses L-phenylalanyl-tRNA(Phe) + an N-terminal L-alpha-aminoacyl-[protein] = an N-terminal L-phenylalanyl-L-alpha-aminoacyl-[protein] + tRNA(Phe). Functions in the N-end rule pathway of protein degradation where it conjugates Leu, Phe and, less efficiently, Met from aminoacyl-tRNAs to the N-termini of proteins containing an N-terminal arginine or lysine. The sequence is that of Leucyl/phenylalanyl-tRNA--protein transferase from Desulfatibacillum aliphaticivorans.